A 328-amino-acid chain; its full sequence is Tetraacyldisaccharide 4'-kinase (328 aa).

Thr-55–Thr-62 is an ATP binding site.

Belongs to the LpxK family.

The enzyme catalyses a lipid A disaccharide + ATP = a lipid IVA + ADP + H(+). The protein operates within glycolipid biosynthesis; lipid IV(A) biosynthesis; lipid IV(A) from (3R)-3-hydroxytetradecanoyl-[acyl-carrier-protein] and UDP-N-acetyl-alpha-D-glucosamine: step 6/6. Transfers the gamma-phosphate of ATP to the 4'-position of a tetraacyldisaccharide 1-phosphate intermediate (termed DS-1-P) to form tetraacyldisaccharide 1,4'-bis-phosphate (lipid IVA). The protein is Tetraacyldisaccharide 4'-kinase of Escherichia coli O17:K52:H18 (strain UMN026 / ExPEC).